Consider the following 293-residue polypeptide: Protein YIF1A (293 aa).

A disordered region spans residues 1–27; sequence MAYHSAYGVHGSKHRTRAAPDPPPLFD. Ala-2 is modified (N-acetylalanine). The Cytoplasmic segment spans residues 2-138; it reads AYHSAYGVHG…PPRKDLNAPD (137 aa). Ser-12 carries the post-translational modification Phosphoserine. The chain crosses the membrane as a helical span at residues 139–159; the sequence is LYIPTMAFITYVLLAGMALGI. Residues 160–174 are Lumenal-facing; that stretch reads QQRFSPEVLGLCAST. The chain crosses the membrane as a helical span at residues 175 to 195; sequence ALVWVFMEVLALLLGLYLATV. Residues 196–203 lie on the Cytoplasmic side of the membrane; it reads RSELSTFH. The chain crosses the membrane as a helical span at residues 204 to 226; the sequence is LLAYSGYKYVGMILSVLTGLLFG. The Lumenal portion of the chain corresponds to 227–229; it reads SDG. Residues 230 to 249 form a helical membrane-spanning segment; the sequence is YYVALAWTSSALMYFIVRSL. Residues 250 to 271 lie on the Cytoplasmic side of the membrane; sequence RTAASGPDSMGGPAPRQRLQLY. The chain crosses the membrane as a helical span at residues 272–292; sequence LTLGAAAFQPLIIYWLTFHLV.

The protein belongs to the YIF1 family. In terms of assembly, interacts with YIPF5.

The protein resides in the endoplasmic reticulum membrane. It localises to the golgi apparatus membrane. The protein localises to the endoplasmic reticulum-Golgi intermediate compartment membrane. Possible role in transport between endoplasmic reticulum and Golgi. This chain is Protein YIF1A (Yif1a), found in Mus musculus (Mouse).